A 284-amino-acid chain; its full sequence is Tryptophan 2,3-dioxygenase (284 aa).

Substrate-binding positions include 51–55 (FIIQH), tyrosine 113, and arginine 117. Residue histidine 240 coordinates heme. Threonine 254 is a substrate binding site.

This sequence belongs to the tryptophan 2,3-dioxygenase family. As to quaternary structure, homotetramer. The cofactor is heme.

It carries out the reaction L-tryptophan + O2 = N-formyl-L-kynurenine. Its pathway is amino-acid degradation; L-tryptophan degradation via kynurenine pathway; L-kynurenine from L-tryptophan: step 1/2. Its function is as follows. Heme-dependent dioxygenase that catalyzes the oxidative cleavage of the L-tryptophan (L-Trp) pyrrole ring and converts L-tryptophan to N-formyl-L-kynurenine. Catalyzes the oxidative cleavage of the indole moiety. The sequence is that of Tryptophan 2,3-dioxygenase from Arthrobacter sp. (strain FB24).